Consider the following 250-residue polypeptide: Imidazole glycerol phosphate synthase subunit HisF (250 aa).

Residues Asp-11 and Asp-130 contribute to the active site.

The protein belongs to the HisA/HisF family. In terms of assembly, heterodimer of HisH and HisF.

It localises to the cytoplasm. It catalyses the reaction 5-[(5-phospho-1-deoxy-D-ribulos-1-ylimino)methylamino]-1-(5-phospho-beta-D-ribosyl)imidazole-4-carboxamide + L-glutamine = D-erythro-1-(imidazol-4-yl)glycerol 3-phosphate + 5-amino-1-(5-phospho-beta-D-ribosyl)imidazole-4-carboxamide + L-glutamate + H(+). It functions in the pathway amino-acid biosynthesis; L-histidine biosynthesis; L-histidine from 5-phospho-alpha-D-ribose 1-diphosphate: step 5/9. IGPS catalyzes the conversion of PRFAR and glutamine to IGP, AICAR and glutamate. The HisF subunit catalyzes the cyclization activity that produces IGP and AICAR from PRFAR using the ammonia provided by the HisH subunit. The protein is Imidazole glycerol phosphate synthase subunit HisF of Bacteroides fragilis (strain ATCC 25285 / DSM 2151 / CCUG 4856 / JCM 11019 / LMG 10263 / NCTC 9343 / Onslow / VPI 2553 / EN-2).